We begin with the raw amino-acid sequence, 424 residues long: Glutamate-1-semialdehyde 2,1-aminomutase (424 aa).

Position 260 is an N6-(pyridoxal phosphate)lysine (K260).

This sequence belongs to the class-III pyridoxal-phosphate-dependent aminotransferase family. HemL subfamily. The cofactor is pyridoxal 5'-phosphate.

The protein resides in the cytoplasm. It catalyses the reaction (S)-4-amino-5-oxopentanoate = 5-aminolevulinate. Its pathway is porphyrin-containing compound metabolism; protoporphyrin-IX biosynthesis; 5-aminolevulinate from L-glutamyl-tRNA(Glu): step 2/2. The protein is Glutamate-1-semialdehyde 2,1-aminomutase of Nitrosopumilus maritimus (strain SCM1).